Reading from the N-terminus, the 91-residue chain is Small ribosomal subunit protein uS15c (91 aa).

The protein belongs to the universal ribosomal protein uS15 family. In terms of assembly, part of the 30S ribosomal subunit.

The protein resides in the plastid. It is found in the chloroplast. The chain is Small ribosomal subunit protein uS15c (rps15) from Eucalyptus globulus subsp. globulus (Tasmanian blue gum).